We begin with the raw amino-acid sequence, 351 residues long: Photosystem II D2 protein (351 aa).

The chain crosses the membrane as a helical span at residues 39 to 59; it reads TSYLSIGGWFTGTTFVTSWYT. His-116 is a binding site for chlorophyll a. The chain crosses the membrane as a helical span at residues 123-139; that stretch reads GFCLRQFEIARLVGIRP. Positions 128 and 141 each coordinate pheophytin a. A helical membrane pass occupies residues 151–164; sequence IFVSVFLMYPLGQA. His-196 contacts chlorophyll a. The helical transmembrane segment at 206-226 threads the bilayer; it reads AALLCAIHGATVQNTIFEDGD. A plastoquinone-binding residues include His-213 and Phe-260. His-213 contributes to the Fe cation binding site. His-267 serves as a coordination point for Fe cation. Residues 277–293 traverse the membrane as a helical segment; it reads GLWTSAIGIVGLALNLR.

It belongs to the reaction center PufL/M/PsbA/D family. In terms of assembly, PSII is composed of 1 copy each of membrane proteins PsbA, PsbB, PsbC, PsbD, PsbE, PsbF, PsbH, PsbI, PsbJ, PsbK, PsbL, PsbM, PsbT, PsbX, PsbY, PsbZ, Psb30/Ycf12, at least 3 peripheral proteins of the oxygen-evolving complex and a large number of cofactors. It forms dimeric complexes. It depends on The D1/D2 heterodimer binds P680, chlorophylls that are the primary electron donor of PSII, and subsequent electron acceptors. It shares a non-heme iron and each subunit binds pheophytin, quinone, additional chlorophylls, carotenoids and lipids. There is also a Cl(-1) ion associated with D1 and D2, which is required for oxygen evolution. The PSII complex binds additional chlorophylls, carotenoids and specific lipids. as a cofactor.

The protein resides in the plastid. It localises to the chloroplast thylakoid membrane. It carries out the reaction 2 a plastoquinone + 4 hnu + 2 H2O = 2 a plastoquinol + O2. Photosystem II (PSII) is a light-driven water:plastoquinone oxidoreductase that uses light energy to abstract electrons from H(2)O, generating O(2) and a proton gradient subsequently used for ATP formation. It consists of a core antenna complex that captures photons, and an electron transfer chain that converts photonic excitation into a charge separation. The D1/D2 (PsbA/PsbD) reaction center heterodimer binds P680, the primary electron donor of PSII as well as several subsequent electron acceptors. D2 is needed for assembly of a stable PSII complex. This Guillardia theta (Cryptophyte) protein is Photosystem II D2 protein.